The chain runs to 252 residues: Phosphate import ATP-binding protein PstB (252 aa).

The 242-residue stretch at Ile6–Ile247 folds into the ABC transporter domain. Residue Gly38–Ser45 coordinates ATP.

Belongs to the ABC transporter superfamily. Phosphate importer (TC 3.A.1.7) family. As to quaternary structure, the complex is composed of two ATP-binding proteins (PstB), two transmembrane proteins (PstC and PstA) and a solute-binding protein (PstS).

Its subcellular location is the cell membrane. The catalysed reaction is phosphate(out) + ATP + H2O = ADP + 2 phosphate(in) + H(+). Part of the ABC transporter complex PstSACB involved in phosphate import. Responsible for energy coupling to the transport system. The sequence is that of Phosphate import ATP-binding protein PstB from Lactobacillus delbrueckii subsp. bulgaricus (strain ATCC 11842 / DSM 20081 / BCRC 10696 / JCM 1002 / NBRC 13953 / NCIMB 11778 / NCTC 12712 / WDCM 00102 / Lb 14).